The sequence spans 318 residues: NADH-ubiquinone oxidoreductase chain 1 (318 aa).

Transmembrane regions (helical) follow at residues 2–22, 70–90, 100–120, 140–160, 172–192, 217–237, 253–273, and 294–314; these read FLVN…FLTL, MFIM…TPLP, LGVL…LWSG, ISYE…SGSF, LWLI…TLAE, GGSF…MNAI, EFYT…FLWI, and LPLT…TASI.

The protein belongs to the complex I subunit 1 family. As to quaternary structure, core subunit of respiratory chain NADH dehydrogenase (Complex I) which is composed of 45 different subunits.

The protein localises to the mitochondrion inner membrane. It carries out the reaction a ubiquinone + NADH + 5 H(+)(in) = a ubiquinol + NAD(+) + 4 H(+)(out). In terms of biological role, core subunit of the mitochondrial membrane respiratory chain NADH dehydrogenase (Complex I) which catalyzes electron transfer from NADH through the respiratory chain, using ubiquinone as an electron acceptor. Essential for the catalytic activity and assembly of complex I. This chain is NADH-ubiquinone oxidoreductase chain 1 (MT-ND1), found in Emballonura alecto (Philippine sheath-tailed bat).